The sequence spans 388 residues: Paired box protein Pax-5 (388 aa).

Positions 15–141 (RHGGVNQLGG…SSINRIIRTK (127 aa)) form a DNA-binding region, paired. A PAI subdomain region spans residues 18–74 (GVNQLGGVFVNGRPLPDVVRQRIVELAHQGVRPCDISRQLRVSHGCVSKILGRYYET). The segment at 93–141 (KVVDKIADYKRQNPTMFAWEIRDRLLAERVCDNDTVPSVSSINRIIRTK) is RED subdomain. The span at 143–158 (QQPTNQQIPPSNHSIA) shows a compositional bias: polar residues. Disordered stretches follow at residues 143–162 (QQPTNQQIPPSNHSIASTGS) and 191–217 (AETNKRKRDEGIQESPIPNGHSLPGRD).

In terms of tissue distribution, first detected in mid-neurula embryos in the folding neural tube. With the completion of neurulation, expression becomes localized to the midbrain/hindbrain boundary (MHB) till at least stage 40. Expression is absent from regions adjacent to the MHB. In tailbuds, weakly and transiently expressed in the developing otic vesicle from stage 21 to stage 27.

Its subcellular location is the nucleus. Probable transcription factor. The protein is Paired box protein Pax-5 of Xenopus laevis (African clawed frog).